Here is a 101-residue protein sequence, read N- to C-terminus: Small ribosomal subunit protein uS14 (101 aa).

A disordered region spans residues 1–23 (MAKKSSVEKNKRRRKMVAQQAPK).

The protein belongs to the universal ribosomal protein uS14 family. Part of the 30S ribosomal subunit. Contacts proteins S3 and S10.

In terms of biological role, binds 16S rRNA, required for the assembly of 30S particles and may also be responsible for determining the conformation of the 16S rRNA at the A site. The protein is Small ribosomal subunit protein uS14 of Rhodospirillum centenum (strain ATCC 51521 / SW).